The primary structure comprises 447 residues: Elongation factor 1-alpha (447 aa).

The 226-residue stretch at 5 to 230 (KIHISIVVIG…DQINEPKRPS (226 aa)) folds into the tr-type G domain. Residues 14–21 (GHVDSGKS) are G1. GTP is bound at residue 14–21 (GHVDSGKS). Lys55 carries the post-translational modification N6,N6-dimethyllysine. The tract at residues 70 to 74 (GITID) is G2. Position 79 is an N6,N6,N6-trimethyllysine (Lys79). The interval 91-94 (DAPG) is G3. GTP contacts are provided by residues 91–95 (DAPGH) and 153–156 (NKMD). The interval 153-156 (NKMD) is G4. Lys187 bears the N6,N6,N6-trimethyllysine mark. The segment at 194 to 196 (SGF) is G5. Lys261 bears the N6-methyllysine mark. At Glu289 the chain carries 5-glutamyl glycerylphosphorylethanolamine. N6,N6,N6-trimethyllysine is present on Lys306. Glu362 carries the post-translational modification 5-glutamyl glycerylphosphorylethanolamine. Lys396 bears the N6,N6,N6-trimethyllysine mark.

It belongs to the TRAFAC class translation factor GTPase superfamily. Classic translation factor GTPase family. EF-Tu/EF-1A subfamily.

Its subcellular location is the cytoplasm. This protein promotes the GTP-dependent binding of aminoacyl-tRNA to the A-site of ribosomes during protein biosynthesis. The chain is Elongation factor 1-alpha from Hordeum vulgare (Barley).